The primary structure comprises 117 residues: NADH-ubiquinone oxidoreductase chain 3 (117 aa).

Transmembrane regions (helical) follow at residues methionine 1–valine 21, phenylalanine 56–tyrosine 76, and threonine 86–tyrosine 106.

Belongs to the complex I subunit 3 family.

The protein localises to the mitochondrion membrane. The catalysed reaction is a ubiquinone + NADH + 5 H(+)(in) = a ubiquinol + NAD(+) + 4 H(+)(out). In terms of biological role, core subunit of the mitochondrial membrane respiratory chain NADH dehydrogenase (Complex I) that is believed to belong to the minimal assembly required for catalysis. Complex I functions in the transfer of electrons from NADH to the respiratory chain. The immediate electron acceptor for the enzyme is believed to be ubiquinone. The chain is NADH-ubiquinone oxidoreductase chain 3 (ND3) from Branchiostoma lanceolatum (Common lancelet).